An 845-amino-acid polypeptide reads, in one-letter code: Complement component C7 (845 aa).

A signal peptide spans 1-22; it reads MQVTSLLILVCFIAAFQVFSRA. Residues 27-80 form the TSP type-1 1 domain; it reads NCKWDSYGPWSECNGCTKTQTRRRSVAVYGQYGGYPCEGSAFETQSCKPERGCP. Cystine bridges form between Cys28–Cys63, Cys39–Cys73, Cys42–Cys79, Cys85–Cys96, Cys91–Cys109, and Cys103–Cys119. An LDL-receptor class A domain is found at 84–120; the sequence is GCGDRFRCFSGQCISKSLVCNGDPDCEEDGADEDKCE. Positions 122–456 constitute an MACPF domain; the sequence is VANPSCNIDK…EYFDEFDPCH (335 aa). N-linked (GlcNAc...) asparagine glycosylation occurs at Asn124. A disulfide bridge links Cys127 with Cys164. Asn201 is a glycosylation site (N-linked (GlcNAc...) asparagine). 21 cysteine pairs are disulfide-bonded: Cys336/Cys353, Cys433/Cys560, Cys455/Cys505, Cys457/Cys473, Cys460/Cys475, Cys477/Cys486, Cys512/Cys545, Cys523/Cys535, Cys571/Cys613, Cys599/Cys626, Cys631/Cys673, Cys659/Cys688, Cys703/Cys714, Cys716/Cys751, Cys722/Cys744, Cys729/Cys764, Cys774/Cys783, Cys777/Cys790, Cys792/Cys826, Cys798/Cys819, and Cys806/Cys839. The EGF-like domain occupies 457 to 487; it reads CRPCQNGGLAIVVETQCQCLCKPYTFGSACE. Positions 500-549 constitute a TSP type-1 2 domain; that stretch reads DGGWNCWSSWSPCVQGKRTRSRECNNPPPRDDGKSCLGETTESKQCEDQD. CCP stretches follow at residues 545–615 and 616–693; these read CEDQ…RCGE and DLQW…QKAT. Sushi domains are found at residues 569-628 and 629-690; these read EFCL…HCQK and LACV…KCVQ. Factor I module (FIM) regions lie at residues 695-771 and 772-844; these read TPPP…SPAE and KVCG…EEAA. An N-linked (GlcNAc...) asparagine glycan is attached at Asn755.

The protein belongs to the complement C6/C7/C8/C9 family. In terms of assembly, monomer or dimer; as a C5b-7 complex it can also form multimeric rosettes. Component of the membrane attack complex (MAC), composed of complement C5b, C6, C7, C8A, C8B, C8G and multiple copies of the pore-forming subunit C9. In terms of processing, C-, N- and O-glycosylated. O-glycosylated with core 1 or possibly core 8 glycans.

It localises to the secreted. Its subcellular location is the target cell membrane. Its activity is regulated as follows. Membrane attack complex (MAC) assembly is inhibited by CD59, thereby protecting self-cells from damage during complement activation. MAC assembly is also inhibited by clusterin (CLU) chaperones that inhibit polymerization of C9. Component of the membrane attack complex (MAC), a multiprotein complex activated by the complement cascade, which inserts into a target cell membrane and forms a pore, leading to target cell membrane rupture and cell lysis. The MAC is initiated by proteolytic cleavage of C5 into complement C5b in response to the classical, alternative, lectin and GZMK complement pathways. The complement pathways consist in a cascade of proteins that leads to phagocytosis and breakdown of pathogens and signaling that strengthens the adaptive immune system. C7 serves as a membrane anchor. During MAC assembly, associates with C5b and C6 to form the C5b-7 complex, a key lipophilic precursor of the MAC complex, which associates with the outer leaflet and reduces the energy for membrane bending. The polypeptide is Complement component C7 (Mus musculus (Mouse)).